The primary structure comprises 354 residues: Glycerol-3-phosphate dehydrogenase [NAD(P)+] (354 aa).

Ser27, Phe28, Arg48, and Lys121 together coordinate NADPH. 2 residues coordinate sn-glycerol 3-phosphate: Lys121 and Gly149. Residue Ala153 coordinates NADPH. Sn-glycerol 3-phosphate contacts are provided by Lys204, Asp257, Ser267, Arg268, and Asn269. The active-site Proton acceptor is Lys204. Arg268 is an NADPH binding site. 2 residues coordinate NADPH: Val292 and Glu294.

It belongs to the NAD-dependent glycerol-3-phosphate dehydrogenase family.

It is found in the cytoplasm. It catalyses the reaction sn-glycerol 3-phosphate + NAD(+) = dihydroxyacetone phosphate + NADH + H(+). The catalysed reaction is sn-glycerol 3-phosphate + NADP(+) = dihydroxyacetone phosphate + NADPH + H(+). The protein operates within membrane lipid metabolism; glycerophospholipid metabolism. Its function is as follows. Catalyzes the reduction of the glycolytic intermediate dihydroxyacetone phosphate (DHAP) to sn-glycerol 3-phosphate (G3P), the key precursor for phospholipid synthesis. The protein is Glycerol-3-phosphate dehydrogenase [NAD(P)+] of Pseudomonas fluorescens (strain Pf0-1).